The primary structure comprises 190 residues: Potassium-transporting ATPase KdpC subunit (190 aa).

Residues 10–30 (TFIFLLLITGGVYPLLTTVLG) form a helical membrane-spanning segment.

The protein belongs to the KdpC family. The system is composed of three essential subunits: KdpA, KdpB and KdpC.

The protein resides in the cell inner membrane. Part of the high-affinity ATP-driven potassium transport (or Kdp) system, which catalyzes the hydrolysis of ATP coupled with the electrogenic transport of potassium into the cytoplasm. This subunit acts as a catalytic chaperone that increases the ATP-binding affinity of the ATP-hydrolyzing subunit KdpB by the formation of a transient KdpB/KdpC/ATP ternary complex. This chain is Potassium-transporting ATPase KdpC subunit, found in Shigella dysenteriae serotype 1 (strain Sd197).